Reading from the N-terminus, the 162-residue chain is NADH-quinone oxidoreductase subunit I (162 aa).

2 4Fe-4S ferredoxin-type domains span residues 52–82 (LRRY…IEAG) and 93–122 (TRYD…EGPN). [4Fe-4S] cluster-binding residues include cysteine 62, cysteine 65, cysteine 68, cysteine 72, cysteine 102, cysteine 105, cysteine 108, and cysteine 112.

It belongs to the complex I 23 kDa subunit family. NDH-1 is composed of 14 different subunits. Subunits NuoA, H, J, K, L, M, N constitute the membrane sector of the complex. It depends on [4Fe-4S] cluster as a cofactor.

It is found in the cell inner membrane. The enzyme catalyses a quinone + NADH + 5 H(+)(in) = a quinol + NAD(+) + 4 H(+)(out). Its function is as follows. NDH-1 shuttles electrons from NADH, via FMN and iron-sulfur (Fe-S) centers, to quinones in the respiratory chain. The immediate electron acceptor for the enzyme in this species is believed to be ubiquinone. Couples the redox reaction to proton translocation (for every two electrons transferred, four hydrogen ions are translocated across the cytoplasmic membrane), and thus conserves the redox energy in a proton gradient. The protein is NADH-quinone oxidoreductase subunit I of Methylorubrum extorquens (strain PA1) (Methylobacterium extorquens).